Consider the following 489-residue polypeptide: Para-nitrobenzyl esterase (489 aa).

The active-site Acyl-ester intermediate is the S189. S189 carries the post-translational modification Phosphoserine. Catalysis depends on charge relay system residues E310 and H399.

It belongs to the type-B carboxylesterase/lipase family. As to quaternary structure, monomer.

In terms of biological role, catalyzes hydrolysis of several beta-lactam antibiotic PNB esters to the corresponding free acid and PNB alcohol. In Bacillus subtilis (strain 168), this protein is Para-nitrobenzyl esterase (pnbA).